The primary structure comprises 353 residues: 6-phosphogluconolactonase (353 aa).

Belongs to the cycloisomerase 2 family.

It localises to the cytoplasm. It catalyses the reaction 6-phospho-D-glucono-1,5-lactone + H2O = 6-phospho-D-gluconate + H(+). It participates in carbohydrate degradation; pentose phosphate pathway; D-ribulose 5-phosphate from D-glucose 6-phosphate (oxidative stage): step 2/3. Carboxylic ester hydrolase that may be involved in ulvan degradation. Ulvan is the main polysaccharide component of the Ulvales (green seaweed) cell wall. It is composed of disaccharide building blocks comprising 3-sulfated rhamnose (Rha3S) linked to D-glucuronic acid (GlcA), L-iduronic acid (IduA), or D-xylose (Xyl). Catalyzes the hydrolysis of 6-phosphogluconolactone to 6-phosphogluconate. The chain is 6-phosphogluconolactonase (pgl) from Formosa agariphila (strain DSM 15362 / KCTC 12365 / LMG 23005 / KMM 3901 / M-2Alg 35-1).